Here is a 1215-residue protein sequence, read N- to C-terminus: DNA-directed RNA polymerase subunit beta' (1215 aa).

Zn(2+)-binding residues include C60, C62, C75, and C78. Residues D450, D452, and D454 each contribute to the Mg(2+) site. Zn(2+) contacts are provided by C818, C892, C899, and C902.

Belongs to the RNA polymerase beta' chain family. As to quaternary structure, the RNAP catalytic core consists of 2 alpha, 1 beta, 1 beta' and 1 omega subunit. When a sigma factor is associated with the core the holoenzyme is formed, which can initiate transcription. It depends on Mg(2+) as a cofactor. The cofactor is Zn(2+).

The catalysed reaction is RNA(n) + a ribonucleoside 5'-triphosphate = RNA(n+1) + diphosphate. Its function is as follows. DNA-dependent RNA polymerase catalyzes the transcription of DNA into RNA using the four ribonucleoside triphosphates as substrates. This is DNA-directed RNA polymerase subunit beta' from Streptococcus sanguinis (strain SK36).